The sequence spans 328 residues: GMP reductase (328 aa).

Catalysis depends on cysteine 176, which acts as the Thioimidate intermediate. NADP(+) is bound at residue 205 to 228; it reads IIADGGIRTHGDIAKSVRFGATMV.

It belongs to the IMPDH/GMPR family. GuaC type 2 subfamily.

The enzyme catalyses IMP + NH4(+) + NADP(+) = GMP + NADPH + 2 H(+). In terms of biological role, catalyzes the irreversible NADPH-dependent deamination of GMP to IMP. It functions in the conversion of nucleobase, nucleoside and nucleotide derivatives of G to A nucleotides, and in maintaining the intracellular balance of A and G nucleotides. This is GMP reductase from Shouchella clausii (strain KSM-K16) (Alkalihalobacillus clausii).